Here is a 222-residue protein sequence, read N- to C-terminus: Orotate phosphoribosyltransferase (222 aa).

Lys29 serves as a coordination point for 5-phospho-alpha-D-ribose 1-diphosphate. Position 37–38 (37–38 (FF)) interacts with orotate. Residues 75–76 (YK), Arg101, Lys102, Lys105, His107, and 126–134 (DDVISAGTS) contribute to the 5-phospho-alpha-D-ribose 1-diphosphate site. Ser130 and Arg158 together coordinate orotate.

The protein belongs to the purine/pyrimidine phosphoribosyltransferase family. PyrE subfamily. In terms of assembly, homodimer. Mg(2+) is required as a cofactor.

The enzyme catalyses orotidine 5'-phosphate + diphosphate = orotate + 5-phospho-alpha-D-ribose 1-diphosphate. It functions in the pathway pyrimidine metabolism; UMP biosynthesis via de novo pathway; UMP from orotate: step 1/2. In terms of biological role, catalyzes the transfer of a ribosyl phosphate group from 5-phosphoribose 1-diphosphate to orotate, leading to the formation of orotidine monophosphate (OMP). This Polynucleobacter necessarius subsp. necessarius (strain STIR1) protein is Orotate phosphoribosyltransferase.